The following is a 176-amino-acid chain: RNA pyrophosphohydrolase (176 aa).

Residues G6–K149 enclose the Nudix hydrolase domain. The Nudix box motif lies at G38–G59.

It belongs to the Nudix hydrolase family. RppH subfamily. A divalent metal cation is required as a cofactor.

In terms of biological role, accelerates the degradation of transcripts by removing pyrophosphate from the 5'-end of triphosphorylated RNA, leading to a more labile monophosphorylated state that can stimulate subsequent ribonuclease cleavage. The protein is RNA pyrophosphohydrolase of Photorhabdus laumondii subsp. laumondii (strain DSM 15139 / CIP 105565 / TT01) (Photorhabdus luminescens subsp. laumondii).